We begin with the raw amino-acid sequence, 1876 residues long: Phenolphthiocerol/phthiocerol polyketide synthase subunit A (1876 aa).

The region spanning 9-83 (ADLRHWLIDY…ALAAYLAAPE (75 aa)) is the Carrier 1 domain. An O-(pantetheine 4'-phosphoryl)serine modification is found at Ser43. The Ketosynthase family 3 (KS3) domain occupies 101-526 (DEPIAVVGMG…GTNAHVVIEQ (426 aa)). Active-site for beta-ketoacyl synthase activity residues include Cys273, His408, and His448. Positions 624–950 (EGSPGPGTVF…NLNKAHTIHP (327 aa)) are acyltransferase. The For malonyltransferase activity role is filled by Ser720. Residues 997-1112 (HTTVATVSAS…AQLSSSPSDS (116 aa)) are N-terminal hotdog fold. The PKS/mFAS DH domain occupies 997 to 1267 (HTTVATVSAS…YRALDFGLDV (271 aa)). Residue His1027 is the Proton acceptor; for dehydratase activity of the active site. Positions 1104–1130 (QLSSSPSDSASSLNEHHRANGQPPERA) are disordered. Residues 1106-1115 (SSSPSDSASS) show a composition bias toward low complexity. The segment at 1130 to 1267 (AHRDLIPDLA…YRALDFGLDV (138 aa)) is C-terminal hotdog fold. Catalysis depends on Asp1186, which acts as the Proton donor; for dehydratase activity. The segment at 1491–1728 (AAYLITGGLG…DGYDVAQAVV (238 aa)) is beta-ketoacyl reductase. 1492 to 1551 (AYLITGGLGALGLLMADWLADRGAHRLVLTGRTPLPPRRDWQLDTLDTELRRRIDAIRAL) lines the NADP(+) pocket. Positions 1759–1836 (EVRSELEQGL…SLASYLAKRV (78 aa)) constitute a Carrier 2 domain. Ser1796 is modified (O-(pantetheine 4'-phosphoryl)serine).

Requires NADP(+) as cofactor. The cofactor is pantetheine 4'-phosphate.

The enzyme catalyses icosanoyl-[(phenol)carboxyphthiodiolenone synthase] + 2 (S)-methylmalonyl-CoA + 3 malonyl-CoA + 5 NADPH + 10 H(+) = C32-carboxyphthiodiolenone-[(phenol)carboxyphthiodiolenone synthase] + 5 CO2 + 5 NADP(+) + 5 CoA + 2 H2O. It carries out the reaction docosanoyl-[(phenol)carboxyphthiodiolenone synthase] + 2 (S)-methylmalonyl-CoA + 3 malonyl-CoA + 5 NADPH + 10 H(+) = C34-carboxyphthiodiolenone-[(phenol)carboxyphthiodiolenone synthase] + 5 CO2 + 5 NADP(+) + 5 CoA + 2 H2O. The catalysed reaction is 17-(4-hydroxyphenyl)heptadecanoyl-[(phenol)carboxyphthiodiolenone synthase] + 2 (S)-methylmalonyl-CoA + 3 malonyl-CoA + 5 NADPH + 10 H(+) = C35-(phenol)carboxyphthiodiolenone-[(phenol)carboxyphthiodiolenone synthase] + 5 CO2 + 5 NADP(+) + 5 CoA + 2 H2O. It catalyses the reaction 19-(4-hydroxyphenyl)nonadecanoyl-[(phenol)carboxyphthiodiolenone synthase] + 2 (S)-methylmalonyl-CoA + 3 malonyl-CoA + 5 NADPH + 10 H(+) = C37-(phenol)carboxyphthiodiolenone-[(phenol)carboxyphthiodiolenone synthase] + 5 CO2 + 5 NADP(+) + 5 CoA + 2 H2O. Its pathway is lipid metabolism; fatty acid biosynthesis. Its function is as follows. Part of the PpsABCDE complex involved in the biosynthesis of the lipid core common to phthiocerols and phenolphthiocerols by successive additions of malonyl-CoA or methylmalonyl-CoA extender units. PpsA can accept as substrate the activated forms of either icosanoyl (C20), docosanoyl (C22) or lignoceroyl (C24) groups from FadD26, or a (4-hydroxyphenyl)-C17 or (4-hydroxyphenyl)-C19 fatty acyl from FadD29. PpsA initiates the biosynthesis and extends its substrate using a malonyl-CoA extender unit. The PpsB and PpsC proteins add the second and third malonyl-CoA extender units. PpsD adds an (R)-methylmalonyl unit and PpsE adds a second (R)-methylmalonyl unit. The incorporation of the methylmalonyl units results in formation of two branched methyl groups in the elongated product. The polypeptide is Phenolphthiocerol/phthiocerol polyketide synthase subunit A (ppsA) (Mycobacterium bovis (strain ATCC BAA-935 / AF2122/97)).